Consider the following 95-residue polypeptide: Small ribosomal subunit protein uS19 (95 aa).

It belongs to the universal ribosomal protein uS19 family.

In terms of biological role, protein S19 forms a complex with S13 that binds strongly to the 16S ribosomal RNA. The polypeptide is Small ribosomal subunit protein uS19 (Bdellovibrio bacteriovorus (strain ATCC 15356 / DSM 50701 / NCIMB 9529 / HD100)).